The sequence spans 71 residues: ATP synthase F(0) complex subunit e, mitochondrial (71 aa).

Lys-34 bears the N6-acetyllysine mark. At Ser-68 the chain carries Phosphoserine.

The protein belongs to the ATPase e subunit family. Component of the ATP synthase complex composed at least of ATP5F1A/subunit alpha, ATP5F1B/subunit beta, ATP5MC1/subunit c (homooctomer), MT-ATP6/subunit a, MT-ATP8/subunit 8, ATP5ME/subunit e, ATP5MF/subunit f, ATP5MG/subunit g, ATP5MK/subunit k, ATP5MJ/subunit j, ATP5F1C/subunit gamma, ATP5F1D/subunit delta, ATP5F1E/subunit epsilon, ATP5PF/subunit F6, ATP5PB/subunit b, ATP5PD/subunit d, ATP5PO/subunit OSCP. ATP synthase complex consists of a soluble F(1) head domain (subunits alpha(3) and beta(3)) - the catalytic core - and a membrane F(0) domain - the membrane proton channel (subunits c, a, 8, e, f, g, k and j). These two domains are linked by a central stalk (subunits gamma, delta, and epsilon) rotating inside the F1 region and a stationary peripheral stalk (subunits F6, b, d, and OSCP).

It is found in the mitochondrion. The protein localises to the mitochondrion inner membrane. In terms of biological role, subunit e, of the mitochondrial membrane ATP synthase complex (F(1)F(0) ATP synthase or Complex V) that produces ATP from ADP in the presence of a proton gradient across the membrane which is generated by electron transport complexes of the respiratory chain. ATP synthase complex consist of a soluble F(1) head domain - the catalytic core - and a membrane F(1) domain - the membrane proton channel. These two domains are linked by a central stalk rotating inside the F(1) region and a stationary peripheral stalk. During catalysis, ATP synthesis in the catalytic domain of F(1) is coupled via a rotary mechanism of the central stalk subunits to proton translocation. In vivo, can only synthesize ATP although its ATP hydrolase activity can be activated artificially in vitro. Part of the complex F(0) domain. The polypeptide is ATP synthase F(0) complex subunit e, mitochondrial (Sus scrofa (Pig)).